A 186-amino-acid polypeptide reads, in one-letter code: MKTSKLNFLTLVASTGLALAFLSGCTSNTGTTQSAKLYSEEELGLRKATIYNENKTLVKEFEYSKEPAGASKVYERSFENAPPMIPHDVEGMMDMSREINMCTSCHLPEVAEAAAATPMPKSHFFNMRTGEDLKGAMDEARYNCSQCHTPQANVTPLVDNRFRPEFRGEDAKNRSNLIDTLNEGVK.

The first 20 residues, 1–20 (MKTSKLNFLTLVASTGLALA), serve as a signal peptide directing secretion. Heme c is bound by residues histidine 87, cysteine 102, cysteine 105, histidine 106, histidine 123, cysteine 144, cysteine 147, and histidine 148.

The protein belongs to the NapB family. Component of the periplasmic nitrate reductase NapAB complex composed of NapA and NapB. Binds 2 heme C groups per subunit.

The protein resides in the periplasm. In terms of biological role, electron transfer subunit of the periplasmic nitrate reductase complex NapAB. Transfers electrons to NapA subunit, thus allowing electron flow between membrane and periplasm. Essential for periplasmic nitrate reduction with nitrate as the terminal electron acceptor. This Wolinella succinogenes (strain ATCC 29543 / DSM 1740 / CCUG 13145 / JCM 31913 / LMG 7466 / NCTC 11488 / FDC 602W) (Vibrio succinogenes) protein is Periplasmic nitrate reductase, electron transfer subunit.